Consider the following 1493-residue polypeptide: Protein Shroom4 (1493 aa).

The PDZ domain occupies 10 to 92 (YVPVQLQGGA…ILKLIVRRRN (83 aa)). Residues 202–282 (CALSLRPEEP…PPQPPVRRDS (81 aa)) are disordered. Composition is skewed to polar residues over residues 234-243 (AETSGGSRRT) and 249-262 (TPSS…QEGY). Serine 411 is subject to Phosphoserine. The segment at 430 to 695 (GSKGMELPPV…SPGQRPGQSS (266 aa)) is disordered. Composition is skewed to basic and acidic residues over residues 470–484 (QSSK…DDRS) and 498–509 (GEADGHPSEKGF). A compositionally biased stretch (polar residues) spans 513–547 (NRTSRAASELANQQPSASGSLVQQATDCSSTTKAA). Phosphoserine is present on serine 729. Disordered stretches follow at residues 740–759 (AAME…ASTA) and 781–813 (SKSL…NFQP). The span at 782–802 (KSLSTSHLPGLTTHSNKTFTQ) shows a compositional bias: polar residues. At serine 1019 the chain carries Phosphoserine. Disordered stretches follow at residues 1117–1170 (AAQQ…ETSG), 1187–1206 (SFGH…AEQE), 1214–1236 (DFLP…PCYY), and 1246–1265 (GQEA…PPSG). Low complexity predominate over residues 1118-1129 (AQQQKQQQQQQK). Positions 1132 to 1159 (EEEEEEEEEEEEEEEEEEEEAEEEEEEL) are enriched in acidic residues. In terms of domain architecture, ASD2 spans 1213 to 1492 (SDFLPPIRGH…RESLLLGPSN (280 aa)). The stretch at 1382–1488 (LSGRLARVEN…LKCLRESLLL (107 aa)) forms a coiled coil.

It belongs to the shroom family. In terms of assembly, interacts directly with F-actin. Expressed in all fetal and adult tissues investigated. Expressed in adult heart, brain, placenta, lung, liver, skeletal muscle, kidney and pancreas. In brain regions detected in cerebellum, cerebral cortex, medulla, spinal cord, occipital pole, frontal lobe, temporal lobe and putamen. The expression is strongest in the medulla and weakest in the cerebral cortex.

It is found in the cytoplasm. It localises to the cytoskeleton. In terms of biological role, probable regulator of cytoskeletal architecture that plays an important role in development. May regulate cellular and cytoskeletal architecture by modulating the spatial distribution of myosin II. In Homo sapiens (Human), this protein is Protein Shroom4 (SHROOM4).